The following is a 102-amino-acid chain: Phosphoribosyl-ATP pyrophosphatase (102 aa).

The protein belongs to the PRA-PH family.

Its subcellular location is the cytoplasm. The catalysed reaction is 1-(5-phospho-beta-D-ribosyl)-ATP + H2O = 1-(5-phospho-beta-D-ribosyl)-5'-AMP + diphosphate + H(+). It functions in the pathway amino-acid biosynthesis; L-histidine biosynthesis; L-histidine from 5-phospho-alpha-D-ribose 1-diphosphate: step 2/9. In Jannaschia sp. (strain CCS1), this protein is Phosphoribosyl-ATP pyrophosphatase.